A 419-amino-acid polypeptide reads, in one-letter code: UDP-N-acetylglucosamine 1-carboxyvinyltransferase (419 aa).

23-24 provides a ligand contact to phosphoenolpyruvate; the sequence is KN. Position 92 (Arg-92) interacts with UDP-N-acetyl-alpha-D-glucosamine. The active-site Proton donor is Cys-116. Cys-116 is modified (2-(S-cysteinyl)pyruvic acid O-phosphothioketal). UDP-N-acetyl-alpha-D-glucosamine-binding positions include 121–125, 161–164, Asp-306, and Ile-328; these read RPVDL and KVSV.

The protein belongs to the EPSP synthase family. MurA subfamily.

The protein resides in the cytoplasm. It carries out the reaction phosphoenolpyruvate + UDP-N-acetyl-alpha-D-glucosamine = UDP-N-acetyl-3-O-(1-carboxyvinyl)-alpha-D-glucosamine + phosphate. The protein operates within cell wall biogenesis; peptidoglycan biosynthesis. Its function is as follows. Cell wall formation. Adds enolpyruvyl to UDP-N-acetylglucosamine. This chain is UDP-N-acetylglucosamine 1-carboxyvinyltransferase, found in Vibrio cholerae serotype O1 (strain ATCC 39541 / Classical Ogawa 395 / O395).